The chain runs to 541 residues: Phosphoenolpyruvate carboxykinase (ATP) (541 aa).

Substrate contacts are provided by Arg-67, Tyr-207, and Lys-213. Residues Lys-213, His-232, and 248 to 256 each bind ATP; that span reads GLSGTGKTT. 2 residues coordinate Mn(2+): Lys-213 and His-232. Asp-269 is a binding site for Mn(2+). ATP contacts are provided by residues Glu-297, Arg-333, 449-450, and Thr-455; that span reads RI. Arg-333 lines the substrate pocket.

It belongs to the phosphoenolpyruvate carboxykinase (ATP) family. Monomer. Mn(2+) is required as a cofactor.

It is found in the cytoplasm. It carries out the reaction oxaloacetate + ATP = phosphoenolpyruvate + ADP + CO2. It functions in the pathway carbohydrate biosynthesis; gluconeogenesis. Its function is as follows. Involved in the gluconeogenesis. Catalyzes the conversion of oxaloacetate (OAA) to phosphoenolpyruvate (PEP) through direct phosphoryl transfer between the nucleoside triphosphate and OAA. This chain is Phosphoenolpyruvate carboxykinase (ATP), found in Aliivibrio salmonicida (strain LFI1238) (Vibrio salmonicida (strain LFI1238)).